The sequence spans 619 residues: Interferon-activable protein 204 (619 aa).

In terms of domain architecture, Pyrin spans 1-88; the sequence is MVNEYKRIVL…AEILKKERSE (88 aa). Positions 24–35 match the Nuclear export signal motif; the sequence is LFKSLLARDLNL. The span at 86-99 shows a compositional bias: basic and acidic residues; it reads RSEVTGETSLEKNG. The disordered stretch occupies residues 86 to 223; it reads RSEVTGETSL…QNQNIPRGAV (138 aa). Residues 122-153 show a composition bias toward low complexity; the sequence is TSATQEETSTAQAGTSTAQARTSTAQAGTSTA. Tandem repeats lie at residues 134–140, 141–147, and 148–154. The segment at 134–154 is 3 X 7 AA tandem repeats of A-[GR]-T-S-T-A-Q; sequence AGTSTAQARTSTAQAGTSTAQ. The Nuclear localization signal motif lies at 150–157; it reads TSTAQKRK. Over residues 159-176 the composition is skewed to basic and acidic residues; it reads MREEETGVKKSKAAKEPD. Positions 190–206 are enriched in low complexity; sequence SPILHSSSSASSNIPSA. A compositionally biased stretch (polar residues) spans 207–218; the sequence is KNQKSQPQNQNI. 2 consecutive HIN-200 domains span residues 213–413 and 417–615; these read PQNQ…IKIS and NVPK…MQVI. The interval 550–614 is interaction with ID2; that stretch reads KKTERNKFIY…RSVRHSYMQV (65 aa).

This sequence belongs to the HIN-200 family. Interacts with UBTF. Interacts with RUNX2. Interacts with ID1, ID2 and ID3. Interacts with STING. Acetylated upon bacterial infection, leading to translocation from nucleus to cytoplasm and subsequent recruitment of STING to activate IFN-beta production. In terms of tissue distribution, present in osteoblasts (at protein level).

It is found in the nucleus. It localises to the nucleolus. The protein resides in the cytoplasm. Its function is as follows. Interferon-stimulated protein that plays a role in several biological processes including cell differentiation, autophagy and innate immunity. Cooperates with CGAS to sense dsDNA and activates the STING-dependent type I IFN pathway. Mechanistically, gets acetylated upon bacterial infection and then translocates from nucleus into cytoplasm to recruit STING for activation of TBK1-dependent IRF3 nuclear translocation and IFN-beta release. Inhibits the transcription of ribosomal RNA. May inhibit DNA binding by UBTF. Inhibits cell growth via p53/TP53 and RB1-dependent and independent pathways. Acts as a coactivator of RUNX2 during osteogenesis. May be involved in macrophage differentiation. Enables skeletal muscle and cardiac myocyte differentiation by sequestring Id proteins in the cytosol and promoting their ubiquitination and subsequent degradation. The polypeptide is Interferon-activable protein 204 (Ifi204) (Mus musculus (Mouse)).